A 273-amino-acid chain; its full sequence is Short-chain dehydrogenase fogB (273 aa).

Residues I16, D66, R128, Y174, K178, V207, and T209 each contribute to the NADP(+) site. Y174 (proton donor) is an active-site residue. Catalysis depends on K178, which acts as the Lowers pKa of active site Tyr.

Belongs to the short-chain dehydrogenases/reductases (SDR) family.

In terms of biological role, short-chain dehydrogenase; part of the gene cluster that mediates the biosynthesis of flavoglaucin and congeners (including aspergin, dihydroauroglaucin and auroglaucin), prenylated salicylaldehyde derivatives carrying a saturated or an unsaturated C-7 side chain. The PKS fogA releases the carboxylic acid (8E,10E,12E)-3,5,7-trihydroxytetradeca-8,10,12-trienoic acid as its product, as well as derivatives with one and two double bonds. FogA is indeed able to reduce the initial triketide, thus being at least partially responsible for the differently saturated heptyl side chains of flavoglaucin congeners. The oxidoreductases fogB, fogC and fogD modify the nascent polyketide in fogA-bound form and, together, fogA, fogB, fogC and fogD are necessary for the formation of the aromatic core and the cyclized PKS products are released as salicyl alcohols. In particular, fogB is responsible for oxidation of a hydroxyl group or reduction of remaining double bond(s) at the C-7 residue whereas fogD is probably involved in the reductive release of the modified PKS products. The cytochrome P450 monooxygenase fogE is then responsible for the hydroxylation at C-3 of the benzene ring. The fogE products are substrates of the prenyltransferase fogH and the prenylated benzyl alcohols are subsequently oxidized by the fogF to produce the final aryl aldehydes flavoglaucin and congeners. The short-chain dehydrogenase fogG does not seem to be involved in the biosynthesis of the prenylated salicylaldehyde derivatives. The polypeptide is Short-chain dehydrogenase fogB (Aspergillus ruber (strain CBS 135680)).